A 522-amino-acid polypeptide reads, in one-letter code: tRNA-2-methylthio-N(6)-dimethylallyladenosine synthase (522 aa).

Over residues 1-26 (MSLTIPSPASGTSTSATTDTAPAAAP) the composition is skewed to low complexity. The segment at 1-27 (MSLTIPSPASGTSTSATTDTAPAAAPQ) is disordered. Positions 28 to 143 (RTYQVRTFGC…LPALLDRARH (116 aa)) constitute an MTTase N-terminal domain. [4Fe-4S] cluster contacts are provided by Cys37, Cys72, Cys106, Cys180, Cys184, and Cys187. Positions 166-396 (RDSVYSGWVS…TALQDRIAAE (231 aa)) constitute a Radical SAM core domain. The region spanning 399 to 469 (ARQLGRRVEV…AFHLVADPAS (71 aa)) is the TRAM domain. A disordered region spans residues 481 to 522 (GDAWDRSQADSCGAPVAGGGAGSNGGKGGVSLGMPALPVRRS). A compositionally biased stretch (gly residues) spans 496–511 (VAGGGAGSNGGKGGVS).

Belongs to the methylthiotransferase family. MiaB subfamily. Monomer. The cofactor is [4Fe-4S] cluster.

It localises to the cytoplasm. The enzyme catalyses N(6)-dimethylallyladenosine(37) in tRNA + (sulfur carrier)-SH + AH2 + 2 S-adenosyl-L-methionine = 2-methylsulfanyl-N(6)-dimethylallyladenosine(37) in tRNA + (sulfur carrier)-H + 5'-deoxyadenosine + L-methionine + A + S-adenosyl-L-homocysteine + 2 H(+). In terms of biological role, catalyzes the methylthiolation of N6-(dimethylallyl)adenosine (i(6)A), leading to the formation of 2-methylthio-N6-(dimethylallyl)adenosine (ms(2)i(6)A) at position 37 in tRNAs that read codons beginning with uridine. This chain is tRNA-2-methylthio-N(6)-dimethylallyladenosine synthase, found in Arthrobacter sp. (strain FB24).